Reading from the N-terminus, the 308-residue chain is D-alanine--D-alanine ligase (308 aa).

An ATP-grasp domain is found at 103-302; that stretch reads KTVMATAGVP…FDELVQWMVE (200 aa). Residue 130–184 participates in ATP binding; the sequence is MAPPYVIKPVADGSSVGVFMVTEAHEHPPQELFRDDWPHGEQLLVEKYVAGKELT. Asp252, Glu269, and Asn271 together coordinate Mg(2+).

The protein belongs to the D-alanine--D-alanine ligase family. It depends on Mg(2+) as a cofactor. The cofactor is Mn(2+).

The protein resides in the cytoplasm. The enzyme catalyses 2 D-alanine + ATP = D-alanyl-D-alanine + ADP + phosphate + H(+). It participates in cell wall biogenesis; peptidoglycan biosynthesis. Cell wall formation. The sequence is that of D-alanine--D-alanine ligase from Rhodopseudomonas palustris (strain BisB18).